Consider the following 445-residue polypeptide: Phosphoglucosamine mutase (445 aa).

S99 (phosphoserine intermediate) is an active-site residue. 4 residues coordinate Mg(2+): S99, D242, D244, and D246. Residue S99 is modified to Phosphoserine.

The protein belongs to the phosphohexose mutase family. Mg(2+) serves as cofactor. Activated by phosphorylation.

It catalyses the reaction alpha-D-glucosamine 1-phosphate = D-glucosamine 6-phosphate. Catalyzes the conversion of glucosamine-6-phosphate to glucosamine-1-phosphate. The protein is Phosphoglucosamine mutase of Helicobacter pylori (strain P12).